Here is a 513-residue protein sequence, read N- to C-terminus: V-type proton ATPase subunit B, kidney isoform (513 aa).

Residues methionine 1–aspartate 18 show a composition bias toward polar residues. The interval methionine 1–threonine 21 is disordered. Position 394 (arginine 394) interacts with ATP. The short motif at aspartate 510 to leucine 513 is the PDZ-binding element.

It belongs to the ATPase alpha/beta chains family. In terms of assembly, V-ATPase is a heteromultimeric enzyme made up of two complexes: the ATP-hydrolytic V1 complex and the proton translocation V0 complex. The V1 complex consists of three catalytic AB heterodimers that form a heterohexamer, three peripheral stalks each consisting of EG heterodimers, one central rotor including subunits D and F, and the regulatory subunits C and H. The proton translocation complex V0 consists of the proton transport subunit a, a ring of proteolipid subunits c9c'', rotary subunit d, subunits e and f, and the accessory subunits ATP6AP1/Ac45 and ATP6AP2/PRR. Forms a complex with NHERF1 and SCL4A7. In terms of tissue distribution, highly expressed in the kidney; found in early distal nephron, encompassing thick ascending limbs and distal convoluted tubules and in the alpha-intercalated cells of the cortical collecting ducts (at protein level). Expressed in the olfactory epithelium (at protein level). Expressed at lower levels in the testis.

The protein resides in the apical cell membrane. It localises to the basolateral cell membrane. In terms of biological role, non-catalytic subunit of the V1 complex of vacuolar(H+)-ATPase (V-ATPase), a multisubunit enzyme composed of a peripheral complex (V1) that hydrolyzes ATP and a membrane integral complex (V0) that translocates protons. V-ATPase is responsible for acidifying and maintaining the pH of intracellular compartments and in some cell types, is targeted to the plasma membrane, where it is responsible for acidifying the extracellular environment. Essential for the proper assembly and activity of V-ATPase. In renal intercalated cells, mediates secretion of protons (H+) into the urine thereby ensuring correct urinary acidification. Required for optimal olfactory function by mediating the acidification of the nasal olfactory epithelium. In Mus musculus (Mouse), this protein is V-type proton ATPase subunit B, kidney isoform (Atp6v1b1).